Consider the following 229-residue polypeptide: Large ribosomal subunit protein uL1 (229 aa).

It belongs to the universal ribosomal protein uL1 family. In terms of assembly, part of the 50S ribosomal subunit.

In terms of biological role, binds directly to 23S rRNA. The L1 stalk is quite mobile in the ribosome, and is involved in E site tRNA release. Its function is as follows. Protein L1 is also a translational repressor protein, it controls the translation of the L11 operon by binding to its mRNA. This chain is Large ribosomal subunit protein uL1, found in Clostridium botulinum (strain Loch Maree / Type A3).